A 213-amino-acid chain; its full sequence is Dimethylamine corrinoid protein 1 (213 aa).

The B12-binding N-terminal domain occupies 1-90 (MSKEELLQEL…LMPEGSASSK (90 aa)). In terms of domain architecture, B12-binding spans 91-213 (MGVIVNGTVE…AVAKAKELLA (123 aa)). His-104 serves as a coordination point for methylcob(III)alamin.

Belongs to the methylamine corrinoid protein family.

Its pathway is one-carbon metabolism; methanogenesis from dimethylamine. Its function is as follows. Acts as a methyl group carrier between MtbB and MtbA. This chain is Dimethylamine corrinoid protein 1 (mtbC1), found in Methanosarcina acetivorans (strain ATCC 35395 / DSM 2834 / JCM 12185 / C2A).